A 987-amino-acid chain; its full sequence is Ephrin type-B receptor 2 (987 aa).

A signal peptide spans 1 to 19 (MGPLWFCCLPLALLPLLAA). At 20–544 (VEETLMDSTT…QTSVQEKLPL (525 aa)) the chain is on the extracellular side. In terms of domain architecture, Eph LBD spans 21–203 (EETLMDSTTA…FYRKCPRVIQ (183 aa)). 2 cysteine pairs are disulfide-bonded: C63-C185 and C98-C108. 5 N-linked (GlcNAc...) asparagine glycosylation sites follow: N266, N337, N429, N478, and N483. Fibronectin type-III domains are found at residues 325–435 (IPSA…TNQA) and 436–531 (APSA…TMTE). Residues 545-565 (IIGSSAAGLVFLIAVVVIIIV) traverse the membrane as a helical segment. Residues 566 to 987 (CNRRGFERAD…QMNQIQSVEV (422 aa)) lie on the Cytoplasmic side of the membrane. The 264-residue stretch at 622–885 (VKIEQVIGAG…QIVNTLDKMI (264 aa)) folds into the Protein kinase domain. ATP is bound by residues 628–636 (IGAGEFGEV) and K654. D747 (proton acceptor) is an active-site residue. Residue K892 forms a Glycyl lysine isopeptide (Lys-Gly) (interchain with G-Cter in ubiquitin) linkage. Residues 914-978 (TSFNTVDEWL…LNSIQVMRAQ (65 aa)) enclose the SAM domain. Positions 985-987 (VEV) match the PDZ-binding motif.

The protein belongs to the protein kinase superfamily. Tyr protein kinase family. Ephrin receptor subfamily. Heterotetramer upon binding of the ligand. The heterotetramer is composed of an ephrin dimer and a receptor dimer. Oligomerization is probably required to induce biological responses. In terms of processing, ligand binding induces cleavage by matrix metalloproteinases (MMPs) such as MMP7/MMP9, producing an EphB2/N-terminal fragment (NTF) and a C-terminal long fragment (EphB2-LF). EphB2-LF is further cleaved by MMPs, producing EphB2/CTF1 which is further cleaved by the PS1/gamma-secretase producing EphB2/CTF2. Polyubiquitinated; ligand binding stimulates ubiquitination. Ubiquitinated by RNF186 at Lys-892, mainly through 'Lys-27'-linked polyubiquitin chains.

The protein resides in the cell membrane. The protein localises to the cell projection. It localises to the axon. It is found in the dendrite. The catalysed reaction is L-tyrosyl-[protein] + ATP = O-phospho-L-tyrosyl-[protein] + ADP + H(+). Its function is as follows. Receptor tyrosine kinase which binds promiscuously transmembrane ephrin-B family ligands residing on adjacent cells, leading to contact-dependent bidirectional signaling into neighboring cells. The signaling pathway downstream of the receptor is referred to as forward signaling while the signaling pathway downstream of the ephrin ligand is referred to as reverse signaling. Functions in axon guidance during development. In addition to axon guidance, also regulates dendritic spines development and maturation and stimulates the formation of excitatory synapses. This Coturnix japonica (Japanese quail) protein is Ephrin type-B receptor 2 (EPHB2).